Here is a 74-residue protein sequence, read N- to C-terminus: Large ribosomal subunit protein bL31 (74 aa).

The protein belongs to the bacterial ribosomal protein bL31 family. Type A subfamily. In terms of assembly, part of the 50S ribosomal subunit.

Binds the 23S rRNA. In Phenylobacterium zucineum (strain HLK1), this protein is Large ribosomal subunit protein bL31.